A 353-amino-acid polypeptide reads, in one-letter code: Phospho-N-acetylmuramoyl-pentapeptide-transferase (353 aa).

Helical transmembrane passes span 24 to 44 (LGFF…ILWA), 66 to 86 (TPTM…VLCA), 88 to 108 (LGNL…FVGF), 129 to 149 (FGML…KGLD), 160 to 180 (PLFE…FLST), 192 to 212 (GLAS…VYVA), 229 to 249 (VGEL…FLWY), 256 to 276 (VFMG…NAIV), 281 to 301 (ILLV…ILQV), and 330 to 350 (KVIV…LLSL).

This sequence belongs to the glycosyltransferase 4 family. MraY subfamily. Mg(2+) serves as cofactor.

The protein resides in the cell inner membrane. It carries out the reaction UDP-N-acetyl-alpha-D-muramoyl-L-alanyl-gamma-D-glutamyl-meso-2,6-diaminopimeloyl-D-alanyl-D-alanine + di-trans,octa-cis-undecaprenyl phosphate = di-trans,octa-cis-undecaprenyl diphospho-N-acetyl-alpha-D-muramoyl-L-alanyl-D-glutamyl-meso-2,6-diaminopimeloyl-D-alanyl-D-alanine + UMP. It functions in the pathway cell wall biogenesis; peptidoglycan biosynthesis. Functionally, catalyzes the initial step of the lipid cycle reactions in the biosynthesis of the cell wall peptidoglycan: transfers peptidoglycan precursor phospho-MurNAc-pentapeptide from UDP-MurNAc-pentapeptide onto the lipid carrier undecaprenyl phosphate, yielding undecaprenyl-pyrophosphoryl-MurNAc-pentapeptide, known as lipid I. The polypeptide is Phospho-N-acetylmuramoyl-pentapeptide-transferase (Helicobacter pylori (strain ATCC 700392 / 26695) (Campylobacter pylori)).